Reading from the N-terminus, the 397-residue chain is Phosphoglycerate kinase (397 aa).

Substrate contacts are provided by residues 19–21 (DFN), Arg35, 58–61 (HLGR), Arg117, and Arg150. ATP contacts are provided by residues Lys201, Glu323, and 349 to 352 (GGDS).

This sequence belongs to the phosphoglycerate kinase family. In terms of assembly, monomer.

Its subcellular location is the cytoplasm. The catalysed reaction is (2R)-3-phosphoglycerate + ATP = (2R)-3-phospho-glyceroyl phosphate + ADP. It participates in carbohydrate degradation; glycolysis; pyruvate from D-glyceraldehyde 3-phosphate: step 2/5. The chain is Phosphoglycerate kinase from Syntrophobacter fumaroxidans (strain DSM 10017 / MPOB).